We begin with the raw amino-acid sequence, 231 residues long: Maleylacetoacetate isomerase maiA (231 aa).

One can recognise a GST N-terminal domain in the interval 7–93 (PKVTLYTYFR…YLEEITPASS (87 aa)). In terms of domain architecture, GST C-terminal spans 102-224 (NPEARAVVRT…HWRTQPDTPE (123 aa)).

This sequence belongs to the GST superfamily. Zeta family.

It catalyses the reaction 4-maleylacetoacetate = 4-fumarylacetoacetate. Its pathway is amino-acid degradation; L-phenylalanine degradation; acetoacetate and fumarate from L-phenylalanine: step 5/6. Its function is as follows. Maleylacetoacetate isomerase; part of the L-tyrosine degradation gene cluster that mediates the biosynthesis of the brownish pigment pyomelanin as an alternative melanin. The 4-hydroxyphenylpyruvate dioxygenase hppD catalyzes the conversion of 4-hydroxyphenylpyruvate to homogentisic acid (HGA). The protein hmgX is crucial for this conversion and thus, probably functions as an accessory factor to mediate specific activity of hppD. The homogentisate 1,2-dioxygenase hmgA is then involved in the cleavage of the aromatic ring of HGA and its conversion to 4-maleylacetoacetate. When hmgA activity is lowered by the cell wall integrity (CWI) signaling pathway, HGA accumulates and leads to the production of pyomelanin through benzoquinone acetic acid after oxidation and polymerization. On the opposite, in non-stress conditions, both hppD and hmgA activities are balanced and HGA is degraded into 4-maleylacetoacetate. 4-maleylacetoacetate is further converted to 4-fumarylacetoacetate by the maleylacetoacetate isomerase maiA, which is degraded into fumarate and acetoacetate by the fumarylacetoacetase fahA. This chain is Maleylacetoacetate isomerase maiA, found in Aspergillus fumigatus (strain ATCC MYA-4609 / CBS 101355 / FGSC A1100 / Af293) (Neosartorya fumigata).